Consider the following 1105-residue polypeptide: Serine/threonine-protein kinase 4 homolog B (1105 aa).

Residues 23–274 (FDLIECLGRG…AKDLLKHSFF (252 aa)) form the Protein kinase domain. ATP-binding positions include 29–37 (LGRGSFGSV) and Lys-52. Asp-142 acts as the Proton acceptor in catalysis. 3 disordered regions span residues 348-396 (STQI…TKNN), 411-482 (SSSA…RQPA), and 495-541 (PSFG…SLPL). Low complexity-rich tracts occupy residues 358–396 (QAQQ…TKNN) and 411–437 (SSSA…TTTN). Residues 438-458 (DYHTGNGRTSSSSPQFGLQHQ) show a composition bias toward polar residues. Composition is skewed to low complexity over residues 459 to 473 (NSSN…TVPS) and 513 to 541 (PIGS…SLPL). A calpain-like cysteine protease-like region spans residues 516-1105 (SPITKRPTPT…SEFDLDFYNN (590 aa)). Domain III stretches follow at residues 641-668 (EVSA…EGSF), 791-830 (VHTQ…QGSI), 836-972 (SEQI…NVIQ), and 1076-1103 (VVIP…LDFY).

It in the N-terminal section; belongs to the protein kinase superfamily. STE Ser/Thr protein kinase family. STE20 subfamily. The protein in the C-terminal section; belongs to the peptidase C2 family. Mn(2+) serves as cofactor.

The enzyme catalyses L-seryl-[protein] + ATP = O-phospho-L-seryl-[protein] + ADP + H(+). The catalysed reaction is L-threonyl-[protein] + ATP = O-phospho-L-threonyl-[protein] + ADP + H(+). Functionally, probable serine/threonine-protein kinase. This chain is Serine/threonine-protein kinase 4 homolog B (krsB), found in Dictyostelium discoideum (Social amoeba).